A 1004-amino-acid polypeptide reads, in one-letter code: MVDSSSYGLLQYFQKLSDEEFQRFKELLQKEQEKFKLKPLSWTKIKNTSKEDLVTQLYTHYPRQVWDMVLNLFLQVNRKDLSTMAQIERRDKQNKYKEFMKNLFQYIWTSETNTYMPDRSYNTIIDRQYKALLDIFDSESDPATAVVLGTRGKGKTVFLRKAMLDWASGVLLQNRFQYVFFFSVFSLNNTTELSLAELISSKLPECSETLDDILSNPKRILFVLDGFDYLKFDLELRTNLCNDWRKRLPTQNVLSSLLQKIMLPECSLLLELGESSCSKIIPLLQNPREIIMSGLSEQSIYFYCVSFFKIQLGVEVFKDLKKNEPLFTLCSNPSMLWMICSSLMWGHYSREEVISSSESTSAIHTIFIMSAFKSIFGLGSSKYKRFKLKTLCTLAVEGMWKQVYVFDSEDLRRNKISESDKTVWLKMKFLQIQGNNIMFYHSTLQWYFATLFYFLKQDKDTYHPVIGSLPQLLGEIYAHKQNQWTHAQTFFFGIATKHVITLLKPCFGNISFKTIRQEIIRYLKSLSQPECNEKLVHPKKLFFCLIENQEERFVSQVMNLFEEITVDISDSDDLGAAEYSLLRASKLKNLHLHIQKKVFSEIHDPEYGSLENFKLDQKFSAINWTMLSILFCNLHVLDLGSCHFNKKVIEVLCNSLSPTPNMPLTVFKLQRLLCSFMTNFGDGSLFCTFLQIPQLKYLNLYGTDLSNDVVEMLCSALKCSTCRVEELLLGKCDISSEACGIMATFLINSKVKHLSLVENPLKNKGVMFLCKMLKDPSCVLESLMLSYCCLTFIACGHLYEALLSNKHLSLLDLGSNFLEDIGVNLLCEALKYPNCTLKELWLPGCYLTSECCEEISAVLTCNKNLKTLKLGNNNIQDTGVKRLCEALCHPKCKVQCLGLDMCELSNDCCEDLALALITCNTLKSLNLDWNALHHSGLVMLCEALNHKKCKLNMLGLDKSSFSEESQTFLQAVEKKNNNLNVLHFPWVEDELKKRGVRLVWNSKN.

The Pyrin domain maps to 1–92; sequence MVDSSSYGLL…TMAQIERRDK (92 aa). In terms of domain architecture, NACHT spans 143–465; sequence ATAVVLGTRG…KQDKDTYHPV (323 aa). 149-156 serves as a coordination point for ATP; that stretch reads GTRGKGKT. 5 LRR repeats span residues 750-770, 779-800, 807-828, 836-857, and 864-884; these read KVKHLSLVENPLKNKGVMFLC, VLESLMLSYCCLTFIACGHLYE, HLSLLDLGSNFLEDIGVNLLCE, TLKELWLPGCYLTSECCEEISA, and NLKTLKLGNNNIQDTGVKRLC.

The protein belongs to the NLRP family. Oocyte specific.

The protein localises to the cytoplasm. Its function is as follows. May be involved in inflammation. This chain is NACHT, LRR and PYD domains-containing protein 9C (Nlrp9c), found in Mus musculus (Mouse).